A 431-amino-acid chain; its full sequence is Dihydroorotase (431 aa).

2 residues coordinate Zn(2+): His-59 and His-61. Substrate-binding positions include 61–63 (HLR) and Asn-93. The Zn(2+) site is built by Asp-151, His-178, His-231, and Asp-304. Asp-304 is a catalytic residue. Substrate is bound by residues His-308 and 322–323 (FG).

Belongs to the metallo-dependent hydrolases superfamily. DHOase family. Class I DHOase subfamily. The cofactor is Zn(2+).

It catalyses the reaction (S)-dihydroorotate + H2O = N-carbamoyl-L-aspartate + H(+). Its pathway is pyrimidine metabolism; UMP biosynthesis via de novo pathway; (S)-dihydroorotate from bicarbonate: step 3/3. Functionally, catalyzes the reversible cyclization of carbamoyl aspartate to dihydroorotate. The sequence is that of Dihydroorotase from Thermoanaerobacter sp. (strain X514).